Here is a 180-residue protein sequence, read N- to C-terminus: ATP-dependent protease subunit HslV (180 aa).

The active site involves Thr-9. Na(+) is bound by residues Ala-164, Cys-167, and Thr-170.

This sequence belongs to the peptidase T1B family. HslV subfamily. In terms of assembly, a double ring-shaped homohexamer of HslV is capped on each side by a ring-shaped HslU homohexamer. The assembly of the HslU/HslV complex is dependent on binding of ATP.

It is found in the cytoplasm. The catalysed reaction is ATP-dependent cleavage of peptide bonds with broad specificity.. Allosterically activated by HslU binding. Protease subunit of a proteasome-like degradation complex believed to be a general protein degrading machinery. The chain is ATP-dependent protease subunit HslV from Leptospira borgpetersenii serovar Hardjo-bovis (strain JB197).